A 320-amino-acid chain; its full sequence is Beta-sarcoglycan (320 aa).

The segment covering 1–10 (MAAAAAAAAA) has biased composition (low complexity). The segment at 1–34 (MAAAAAAAAATEQQSSNGPVKKSMREKAVERRNV) is disordered. At 1–67 (MAAAAAAAAA…GLRGRKGNLA (67 aa)) the chain is on the cytoplasmic side. Over residues 23-34 (SMREKAVERRNV) the composition is skewed to basic and acidic residues. The helical; Signal-anchor for type II membrane protein transmembrane segment at 68–88 (ICVIVLLFILAVINLLITLVI) threads the bilayer. The Extracellular segment spans residues 89–320 (WAVIRIGPNG…VADNPCGNTH (232 aa)). Residues asparagine 160, asparagine 213, and asparagine 260 are each glycosylated (N-linked (GlcNAc...) asparagine). 2 cysteine pairs are disulfide-bonded: cysteine 290-cysteine 316 and cysteine 292-cysteine 309.

Belongs to the sarcoglycan beta/delta/gamma/zeta family. As to quaternary structure, cross-link to form 2 major subcomplexes: one consisting of SGCB, SGCD and SGCG and the other consisting of SGCB and SGCD. The association between SGCB and SGCG is particularly strong while SGCA is loosely associated with the other sarcoglycans. Disulfide bonds are present.

The protein resides in the cell membrane. The protein localises to the sarcolemma. It is found in the cytoplasm. It localises to the cytoskeleton. Functionally, component of the sarcoglycan complex, a subcomplex of the dystrophin-glycoprotein complex which forms a link between the F-actin cytoskeleton and the extracellular matrix. In Mesocricetus auratus (Golden hamster), this protein is Beta-sarcoglycan (SGCB).